We begin with the raw amino-acid sequence, 124 residues long: Glycine cleavage system H protein (124 aa).

Residues 22-104 form the Lipoyl-binding domain; it reads VATVGITEFA…YGAGWLFRVE (83 aa). Lys63 bears the N6-lipoyllysine mark.

Belongs to the GcvH family. In terms of assembly, the glycine cleavage system is composed of four proteins: P, T, L and H. Requires (R)-lipoate as cofactor.

Functionally, the glycine cleavage system catalyzes the degradation of glycine. The H protein shuttles the methylamine group of glycine from the P protein to the T protein. In Beutenbergia cavernae (strain ATCC BAA-8 / DSM 12333 / CCUG 43141 / JCM 11478 / NBRC 16432 / NCIMB 13614 / HKI 0122), this protein is Glycine cleavage system H protein.